Here is a 216-residue protein sequence, read N- to C-terminus: uncharacterized protein (216 aa).

A helical membrane pass occupies residues 7-29 (ILVIFFLIFFIGFEFSDMTLAFI).

Its subcellular location is the membrane. This is an uncharacterized protein from Archaeoglobus fulgidus (strain ATCC 49558 / DSM 4304 / JCM 9628 / NBRC 100126 / VC-16).